The sequence spans 250 residues: MILFNNVNKVWPNGKQVLKNITLEINKGELVAVIGLSGAGKTTLLKTINKINDISSGEIIIDFDKTKDHYEITKTRGKKLQKLRQKIGLMSQEYNNIANKTVLQNVLNARVSSQKGINKIIGFFKREDKLIALNSLNKLNLLDYAYIRADNLSGGQQQRVALARTLAQQPFLIIADEPVSALDPILANQVMKDFKNINKKDGITVIINIHHVDLAKKYATRVIGLNNGEIVFDDVPSKLDAQAMKKIYGE.

The 246-residue stretch at 2–247 (ILFNNVNKVW…KLDAQAMKKI (246 aa)) folds into the ABC transporter domain. 35–42 (GLSGAGKT) provides a ligand contact to ATP.

Belongs to the ABC transporter superfamily. Phosphonates importer (TC 3.A.1.9.1) family. As to quaternary structure, the complex is composed of two ATP-binding proteins (PhnC), two transmembrane proteins (PhnE) and a solute-binding protein (PhnD).

The protein resides in the cell membrane. The enzyme catalyses phosphonate(out) + ATP + H2O = phosphonate(in) + ADP + phosphate + H(+). Part of the ABC transporter complex PhnCDE involved in phosphonates import. Responsible for energy coupling to the transport system. This chain is Phosphonates import ATP-binding protein PhnC, found in Mycoplasma capricolum subsp. capricolum (strain California kid / ATCC 27343 / NCTC 10154).